The primary structure comprises 73 residues: Crustacean hyperglycemic hormone (73 aa).

3 disulfide bridges follow: C7–C43, C23–C39, and C26–C52. S73 carries the serine amide modification.

In terms of tissue distribution, produced by the medulla terminalis X-organ in the eyestalks and transported to the sinus gland where they are stored and released. Found also in the brain; in the neuroendocrine structures of the protocerebrum.

It localises to the secreted. Hormone found in the sinus gland of isopods and decapods which controls the blood sugar level. Has a secretagogue action over the amylase released from the midgut gland. May act as a stress hormone and may be involved in the control of molting and reproduction. This is Crustacean hyperglycemic hormone from Armadillidium vulgare (Pillbug).